The primary structure comprises 218 residues: PKHD-type hydroxylase IL0759 (218 aa).

Positions 76 to 170 (QVARVTINRY…RLAMIGWVQS (95 aa)) constitute a Fe2OG dioxygenase domain. The Fe cation site is built by histidine 94, aspartate 96, and histidine 151. Arginine 161 serves as a coordination point for 2-oxoglutarate.

Fe(2+) serves as cofactor. It depends on L-ascorbate as a cofactor.

The chain is PKHD-type hydroxylase IL0759 from Idiomarina loihiensis (strain ATCC BAA-735 / DSM 15497 / L2-TR).